Here is a 138-residue protein sequence, read N- to C-terminus: MKKTALLNAELSYLVASLGHFDEITICDAGLPIPNETQRIDLALTHGVPAFIDTVRVILSEMQITGVLLASEFKQVSPDLHRALIELVEQEKLAGSRIELIYISHEAFKERTSNSKAVVRTGECTPYANVIFQSGVVF.

The active-site Proton donor is His-20. Residues Asp-28, His-105, and 127 to 129 (YAN) each bind substrate.

The protein belongs to the RbsD / FucU family. RbsD subfamily. In terms of assembly, homodecamer.

It localises to the cytoplasm. It carries out the reaction beta-D-ribopyranose = beta-D-ribofuranose. Its pathway is carbohydrate metabolism; D-ribose degradation; D-ribose 5-phosphate from beta-D-ribopyranose: step 1/2. Its function is as follows. Catalyzes the interconversion of beta-pyran and beta-furan forms of D-ribose. The protein is D-ribose pyranase of Psychromonas ingrahamii (strain DSM 17664 / CCUG 51855 / 37).